A 106-amino-acid polypeptide reads, in one-letter code: Large ribosomal subunit protein uL24 (106 aa).

This sequence belongs to the universal ribosomal protein uL24 family. Part of the 50S ribosomal subunit.

Its function is as follows. One of two assembly initiator proteins, it binds directly to the 5'-end of the 23S rRNA, where it nucleates assembly of the 50S subunit. One of the proteins that surrounds the polypeptide exit tunnel on the outside of the subunit. The polypeptide is Large ribosomal subunit protein uL24 (Acidovorax sp. (strain JS42)).